The chain runs to 156 residues: MSNTSEDNITVRFVTENDKEGWQRLWKSYQDFYEVSFPDDLDDFNFGRFLDPNIKMWAAVAVESSSEKIIGMINFFNHMTTWDFKDKIYINDLYVDENSRVKGAGGKLIQFVYDEADKLGTPSVYWCTDESNHRAQLLYVKVGYKAPKILYKRKGY.

Positions 9–156 constitute an N-acetyltransferase domain; sequence ITVRFVTEND…PKILYKRKGY (148 aa). 93-106 is a binding site for acetyl-CoA; sequence LYVDENSRVKGAGG.

Belongs to the acetyltransferase family. GNAT subfamily. Forms homodimers in the absence, and homotetramers in the presence of acetyl-CoA. Post-translationally, autoacetylates in an intermolecular reaction.

The enzyme catalyses L-lysyl-[protein] + acetyl-CoA = N(6)-acetyl-L-lysyl-[protein] + CoA + H(+). N-acetyltransferase that acetylates histone H3 at 'Lys-14' and histone H4 at 'Lys-5' and 'Lys-12'. Also acetylates polyamines like putrescine, spermidine and spermine, and certain other small basic proteins like nuclear HMG proteins. This is Histone acetyltransferase HPA2 from Saccharomyces cerevisiae (strain ATCC 204508 / S288c) (Baker's yeast).